A 454-amino-acid chain; its full sequence is Bifunctional protein GlmU (454 aa).

The pyrophosphorylase stretch occupies residues 1–226 (MSTTVIILAA…AFEVEGVNDR (226 aa)). UDP-N-acetyl-alpha-D-glucosamine contacts are provided by residues 8–11 (LAAG), Lys-22, Gln-73, 78–79 (GT), 100–102 (YGD), Gly-137, Glu-151, Asn-166, and Asn-224. Asp-102 lines the Mg(2+) pocket. Asn-224 contributes to the Mg(2+) binding site. The tract at residues 227-247 (LQLAALEREFQKQQAKELMQQ) is linker. Residues 248-454 (GVTFADPARF…NYQRPQKLKK (207 aa)) are N-acetyltransferase. Residues Arg-330 and Lys-348 each coordinate UDP-N-acetyl-alpha-D-glucosamine. His-360 functions as the Proton acceptor in the catalytic mechanism. Tyr-363 and Asn-374 together coordinate UDP-N-acetyl-alpha-D-glucosamine. Acetyl-CoA is bound by residues Ala-377, 383-384 (NY), Ser-402, Ala-420, and Arg-437.

The protein in the N-terminal section; belongs to the N-acetylglucosamine-1-phosphate uridyltransferase family. This sequence in the C-terminal section; belongs to the transferase hexapeptide repeat family. Homotrimer. The cofactor is Mg(2+).

Its subcellular location is the cytoplasm. The catalysed reaction is alpha-D-glucosamine 1-phosphate + acetyl-CoA = N-acetyl-alpha-D-glucosamine 1-phosphate + CoA + H(+). It catalyses the reaction N-acetyl-alpha-D-glucosamine 1-phosphate + UTP + H(+) = UDP-N-acetyl-alpha-D-glucosamine + diphosphate. It participates in nucleotide-sugar biosynthesis; UDP-N-acetyl-alpha-D-glucosamine biosynthesis; N-acetyl-alpha-D-glucosamine 1-phosphate from alpha-D-glucosamine 6-phosphate (route II): step 2/2. Its pathway is nucleotide-sugar biosynthesis; UDP-N-acetyl-alpha-D-glucosamine biosynthesis; UDP-N-acetyl-alpha-D-glucosamine from N-acetyl-alpha-D-glucosamine 1-phosphate: step 1/1. The protein operates within bacterial outer membrane biogenesis; LPS lipid A biosynthesis. Functionally, catalyzes the last two sequential reactions in the de novo biosynthetic pathway for UDP-N-acetylglucosamine (UDP-GlcNAc). The C-terminal domain catalyzes the transfer of acetyl group from acetyl coenzyme A to glucosamine-1-phosphate (GlcN-1-P) to produce N-acetylglucosamine-1-phosphate (GlcNAc-1-P), which is converted into UDP-GlcNAc by the transfer of uridine 5-monophosphate (from uridine 5-triphosphate), a reaction catalyzed by the N-terminal domain. The chain is Bifunctional protein GlmU from Acinetobacter baumannii (strain ACICU).